The primary structure comprises 168 residues: Ribosome maturation factor RimM (168 aa).

The PRC barrel domain occupies 92 to 166 (EDTFYKADLI…RITVDPIEGM (75 aa)).

The protein belongs to the RimM family. In terms of assembly, binds ribosomal protein uS19.

It localises to the cytoplasm. Its function is as follows. An accessory protein needed during the final step in the assembly of 30S ribosomal subunit, possibly for assembly of the head region. Essential for efficient processing of 16S rRNA. May be needed both before and after RbfA during the maturation of 16S rRNA. It has affinity for free ribosomal 30S subunits but not for 70S ribosomes. The protein is Ribosome maturation factor RimM of Alkaliphilus metalliredigens (strain QYMF).